The sequence spans 161 residues: Protein-export protein SecB (161 aa).

Belongs to the SecB family. In terms of assembly, homotetramer, a dimer of dimers. One homotetramer interacts with 1 SecA dimer.

Its subcellular location is the cytoplasm. Functionally, one of the proteins required for the normal export of preproteins out of the cell cytoplasm. It is a molecular chaperone that binds to a subset of precursor proteins, maintaining them in a translocation-competent state. It also specifically binds to its receptor SecA. This chain is Protein-export protein SecB, found in Pseudomonas putida (strain ATCC 700007 / DSM 6899 / JCM 31910 / BCRC 17059 / LMG 24140 / F1).